The chain runs to 1444 residues: Probable serine/threonine-protein kinase irlC (1444 aa).

The interval 335 to 370 is disordered; that stretch reads TLINNNNNNNNNNNNNNNNNNNNNNNNNNNNNNNSK. Positions 338–368 are enriched in low complexity; the sequence is NNNNNNNNNNNNNNNNNNNNNNNNNNNNNNN. The segment at 495–529 adopts an SWIM-type zinc-finger fold; the sequence is FTFYLSFGEIFTCSCEDYKREFSCKHMFFILLNYY. A compositionally biased stretch (low complexity) spans 584–613; it reads TSPFQSINNNNNNNLNNNNNNNLNNNNNNE. 2 disordered regions span residues 584-619 and 864-938; these read TSPF…NKFK and QKEK…ITPI. Coiled-coil stretches lie at residues 593–620 and 847–879; these read NNNN…KFKE and IKAE…KSKI. The span at 864-876 shows a compositional bias: basic residues; the sequence is QKEKKKQKQKQSK. The span at 885–937 shows a compositional bias: low complexity; that stretch reads SSSSSSSSSPSTSNTTITSTTPTTTTTTTTTTTPTTTTTTTTTSSPKQKPITP. Positions 981-1246 constitute a Protein kinase domain; sequence RKEENVLGRG…IEKILLHPFF (266 aa). ATP-binding positions include 987–995 and Lys-1010; that span reads LGRGSNGTL. Asp-1116 serves as the catalytic Proton acceptor. A KEN domain is found at 1279 to 1444; the sequence is NYQEINLKNN…LIYFNDLIIK (166 aa).

The protein belongs to the protein kinase superfamily. Ser/Thr protein kinase family.

The catalysed reaction is L-seryl-[protein] + ATP = O-phospho-L-seryl-[protein] + ADP + H(+). It carries out the reaction L-threonyl-[protein] + ATP = O-phospho-L-threonyl-[protein] + ADP + H(+). The protein is Probable serine/threonine-protein kinase irlC (irlC) of Dictyostelium discoideum (Social amoeba).